We begin with the raw amino-acid sequence, 82 residues long: Small ribosomal subunit protein bS16 (82 aa).

The protein belongs to the bacterial ribosomal protein bS16 family.

The protein is Small ribosomal subunit protein bS16 of Deinococcus geothermalis (strain DSM 11300 / CIP 105573 / AG-3a).